Reading from the N-terminus, the 317-residue chain is MDYRVLLYYKYVTIDDPETFAAEHLEFCKENNLKGRILVSTEGINGTLSGTKEDTDQYIAHMRADERFKDITFKIDEAEGHAFKKMHVRPRHEIVALDLENDIDPRETTGKYLSPSEFREALEDDDTIVIDARNDYEFDLGHFRGAVRPNITRFRDLPDWIKENKEVFMDKKIVTYCTGGIRCEKFSGFLLKEGFEDVAQLEGGIATYGKDPETKGELWDGKMYVFDERISVDVNQVEKTVIGKEWFDGTPCERYINCSNPECNKQILVSEENEHRYLGACCKECAEHERNRYVAKHNISDEEKEKCLENFKETVQQ.

The 95-residue stretch at 123–217 folds into the Rhodanese domain; the sequence is EDDDTIVIDA…YGKDPETKGE (95 aa). Catalysis depends on cysteine 177, which acts as the Cysteine persulfide intermediate.

The protein belongs to the TrhO family.

It catalyses the reaction uridine(34) in tRNA + AH2 + O2 = 5-hydroxyuridine(34) in tRNA + A + H2O. Catalyzes oxygen-dependent 5-hydroxyuridine (ho5U) modification at position 34 in tRNAs. This is tRNA uridine(34) hydroxylase from Staphylococcus carnosus (strain TM300).